Consider the following 465-residue polypeptide: Presenilin spe-4 (465 aa).

Residues 1 to 18 (MDTLRSISSELVRSSQLR) are Cytoplasmic-facing. A helical membrane pass occupies residues 19–39 (WTLFSVIANMSLTLSIWIGVY). The Lumenal segment spans residues 40–71 (NMEVNSELSKTYFLDPSFEQTTGNLLLDGFIN). Residues 72-92 (GVGTILVLGCVSFIMLAFVLF) traverse the membrane as a helical segment. Topologically, residues 93-96 (DFRR) are cytoplasmic. Residues 97–117 (IVKAWLTLSCLLILFGVSAQT) form a helical membrane-spanning segment. The Lumenal portion of the chain corresponds to 118 to 136 (LHDMFSQVFDQDDNNQYYM). The chain crosses the membrane as a helical span at residues 137-157 (TIVLIVVPTVVYGFGGIYAFF). Over 158–160 (SNS) the chain is Cytoplasmic. Residues 161-181 (SLILHQIFVVTNCSLISVFYL) traverse the membrane as a helical segment. At 182–190 (RVFPSKTTW) the chain is on the lumenal side. A helical transmembrane segment spans residues 191-211 (FVLWIVLFWDLFAVLAPMGPL). Asp200 is an active-site residue. The Cytoplasmic segment spans residues 212–389 (KKVQEKASDY…DALNDGEVLR (178 aa)). The segment at 287–356 (INPDSVPTEH…SDISTAEECD (70 aa)) is disordered. Residues 326-350 (SETSSGSSNLSSSDSSTTVSTSDIS) are compositionally biased toward low complexity. A helical membrane pass occupies residues 390–410 (LGFGDFVFYSLLIGQAAASGC). Residue Asp394 is part of the active site. Pro411 is a topological domain (lumenal). Residues 412–432 (FAVISAALGILFGLVVTLTVF) traverse the membrane as a helical segment. Residues 433-439 (STEESTT) are Cytoplasmic-facing. Positions 440-442 (PAL) match the PAL motif. Positions 440 to 460 (PALPLPVICGTFCYFSSMFFW) form an intramembrane region, helical. The Cytoplasmic portion of the chain corresponds to 461 to 465 (EQLYG).

It belongs to the peptidase A22A family. As to quaternary structure, homodimer. Potential component of the gamma-secretase complex, a complex probably composed of the presenilin homodimer (sel-12, hop-1 or spe-4), nicastrin (aph-2), aph-1 and pen-2.

It is found in the endoplasmic reticulum membrane. The protein localises to the golgi apparatus. The protein resides in the cis-Golgi network membrane. Potential catalytic subunit of the gamma-secretase complex during spermatogenesis, an endoprotease complex that catalyzes the intramembrane cleavage of integral membrane proteins such as Notch receptors (lin-12 or glp-1). Involved in spermatid formation during meiosis II. May be required for proper localization of macromolecules that are subject to asymmetric partitioning during spermatogenesis. The chain is Presenilin spe-4 from Caenorhabditis elegans.